The chain runs to 375 residues: Putative nuclease YhcG (375 aa).

As to quaternary structure, interacts with DNA processing enzymes, including the restriction complex HsdMRS, the integrases IntF and IntS, and the recombinase PinE.

Its function is as follows. May be a nuclease involved in DNA recombination and repair. The protein is Putative nuclease YhcG (yhcG) of Escherichia coli (strain K12).